The following is a 487-amino-acid chain: Citrate/succinate antiporter (487 aa).

14 helical membrane-spanning segments follow: residues 11-31 (LLAP…DGMP), 60-80 (FIAV…AKEL), 95-115 (GLAG…IFAL), 138-158 (TLTL…FTPS), 190-210 (IGGY…SMFV), 214-234 (APNV…ISWL), 237-257 (FLCF…LSYV), 288-308 (WTLI…SEVI), 309-329 (NATA…VVPW), 345-365 (LATL…DWFA), 379-399 (ATVI…ASLS), 401-421 (HTAT…GVPM), 424-444 (LCIL…YATG), and 463-483 (LGAI…WPIL).

The protein belongs to the SLC13A/DASS transporter (TC 2.A.47) family. DIT1 subfamily.

It localises to the cell inner membrane. Responsible for the uptake of citrate in exchange to the efflux of succinate. Has a relatively broad specificity for C(4)-dicarboxylates and tricarboxylates. The protein is Citrate/succinate antiporter (citT) of Escherichia coli O157:H7.